A 443-amino-acid chain; its full sequence is METFILSSDSDDDSGPPPSKRRTIEGIPRSFSGDKKIRFSFGASNMSQDTTQEIIPEDTDTVPLTIPSTPALSGKFDSKTPKSVRRRSVSMSCFTPIVETINQPPTNQACSSFLQKEYNFHDLSSDEEGGDGGAGCSKDEDKIIEDNLNLRALLSPEKKKRKEKIEEVQNEFYGVYCLISRSDRPCYKNRCYIGYTVDPNRRIMQHNGGRDKGGAKKTDSRGPWDMVCVVHGFPNHVAALHFEWAWQNPLVSKSLKEKQLRKERKETPFAFQLRIACELMNSSAFCRFALTFRWLITTEELPFPTSCVPPDHTKLRFGKVKKEMSLVPSKREDYLEMGECRICGKDIEKLWSLVRCISATCPSHFHSKCLSENGLKLKNEHVDHVYPLKANCPTCGQFYLWGDIIREQRRIIKISTKCAEEFQNMVVRKELPHREISPISSKK.

Residues 1–27 are disordered; sequence METFILSSDSDDDSGPPPSKRRTIEGI. The GIY-YIG domain maps to 171-258; that stretch reads EFYGVYCLIS…PLVSKSLKEK (88 aa). The SLX1-type zinc finger occupies 340 to 395; it reads CRICGKDIEKLWSLVRCISATCPSHFHSKCLSENGLKLKNEHVDHVYPLKANCPTC.

This sequence belongs to the SLX1 family. Forms a heterodimer with him-18/slx-4. A divalent metal cation is required as a cofactor.

It localises to the nucleus. Functionally, catalytic subunit of a heterodimeric structure-specific endonuclease that resolves DNA secondary structures generated during DNA repair and recombination. Has endonuclease activity towards branched DNA substrates, introducing single-strand cuts in duplex DNA close to junctions with ss-DNA (Potential). Has a preference for replication forks over 5' flap structures or Holliday junctions and shows much lower activity toward 3' flap structures. Required for proper crossover distribution through inhibition of crossover formation at the central region of chromosomes. The chain is Structure-specific endonuclease subunit SLX1 homolog from Caenorhabditis elegans.